The following is a 630-amino-acid chain: MGRIRKLDDLLANKIAAGEVVERPASVVKELVENAIDAHSTVINIELEEAGMAKIRVIDNGDGMEEDDCLLAFERHATSKIHDEHDLFRIRTLGFRGEALPSIASVSEVELTTGTGSGPGTKLVLQGGALVSRERAAGRKGTDITVSNLFFNTPARLKYMKTIHTELGHAADVVNRLALAHPDVSFRLRHQGKTLLATNGSGDVRHVLAAIYGAETARQMIPIEAESLDFTIRGYISPPDVTRASRNYISLVVNGRYVRSVPLMKAIEAGYHTLLPIGRYPIVFLSIEMDPVLVDVNVHPAKLEVRFSKEAELNELVTDAIRQAFRKRTLIPSVSADSKMAKPKAEQAAWTFTHRVREPSVLSSDIGGGEDATAPLAPLTGDAPAERPSAAVQTDECGILDEHGPAFERKQEEEVGEERCSPRLPTDGQAEDKAAADRLPPLYPIGQLHGTYILAENEHGLYMIDQHAAQERINYEYFREKLGEATKEVQELLVPLMFEYPADEYERIAACRDELARCGVFLEPFGPRAFLVRSHPTWFPKGREREIIEEMIEQVLAAKTVDIKQLREQAAILMSCKRAIKANQHLRQDELFALLEALRQTTDPFTCPHGRPIIVHFSTYEIEKLFKRVM.

Disordered regions lie at residues 361–386 (VLSS…APAE) and 407–431 (FERK…GQAE). Residues 407-421 (FERKQEEEVGEERCS) are compositionally biased toward basic and acidic residues.

This sequence belongs to the DNA mismatch repair MutL/HexB family.

This protein is involved in the repair of mismatches in DNA. It is required for dam-dependent methyl-directed DNA mismatch repair. May act as a 'molecular matchmaker', a protein that promotes the formation of a stable complex between two or more DNA-binding proteins in an ATP-dependent manner without itself being part of a final effector complex. The chain is DNA mismatch repair protein MutL from Geobacillus kaustophilus (strain HTA426).